We begin with the raw amino-acid sequence, 366 residues long: Glycerol-3-phosphate dehydrogenase [NAD(+)], glycosomal (366 aa).

Residues 22–27 (GSGAFG), Phe97, Lys125, and Ala157 each bind NAD(+). Lys125 contacts substrate. The active-site Proton acceptor is the Lys210. The NAD(+) site is built by Arg274, Val298, and Glu300. Substrate is bound at residue 274–275 (RN). The short motif at 364-366 (SKL) is the Microbody targeting signal element.

The protein belongs to the NAD-dependent glycerol-3-phosphate dehydrogenase family. As to quaternary structure, homodimer.

Its subcellular location is the glycosome. The enzyme catalyses sn-glycerol 3-phosphate + NAD(+) = dihydroxyacetone phosphate + NADH + H(+). This is Glycerol-3-phosphate dehydrogenase [NAD(+)], glycosomal (GPD) from Leishmania mexicana.